The chain runs to 432 residues: Proline--tRNA ligase (432 aa).

It belongs to the class-II aminoacyl-tRNA synthetase family. ProS type 2 subfamily. In terms of assembly, homodimer.

Its subcellular location is the cytoplasm. The enzyme catalyses tRNA(Pro) + L-proline + ATP = L-prolyl-tRNA(Pro) + AMP + diphosphate. Functionally, catalyzes the attachment of proline to tRNA(Pro) in a two-step reaction: proline is first activated by ATP to form Pro-AMP and then transferred to the acceptor end of tRNA(Pro). The chain is Proline--tRNA ligase from Rickettsia bellii (strain OSU 85-389).